The following is a 405-amino-acid chain: MKRTFILMLDSFGIGAASDADKFGDIGADTFGNIAKACAEGKANIGRDGSLKLPNLAKLGLGHAGFESTGQFAPGFSQDVEVVGAYGYADELSTGKDTPSGHWEMAGVPVLYDWGYFNDLQDSFPKELTDKILARAGLSGFLGNCHASGTTILEQLGEEHMRSGMPIFYTSADSVFQVACHEESFGLDNLLRLCEIAREELGPYNIGRVIARPFIGTGPSDFSRTGNRRDYAVEPPSKTVLDKLKDAGGEVVSVGKIADIYAHCGITKKVKASGLEALFDATLEQIKQAGDRTIVFTNFVDFDSHYGHRRDVAGYAKALEYFDERLPELLALLEQDDLLLLTADHGCDPTWPGSDHTRERVPVLALGAGLAAGSLGLRNSFADMGQSIASYFELEPMEYGESFIQ.

6 residues coordinate Mn(2+): D10, D303, H308, D344, H345, and H356.

Belongs to the phosphopentomutase family. The cofactor is Mn(2+).

The protein localises to the cytoplasm. It carries out the reaction 2-deoxy-alpha-D-ribose 1-phosphate = 2-deoxy-D-ribose 5-phosphate. The catalysed reaction is alpha-D-ribose 1-phosphate = D-ribose 5-phosphate. Its pathway is carbohydrate degradation; 2-deoxy-D-ribose 1-phosphate degradation; D-glyceraldehyde 3-phosphate and acetaldehyde from 2-deoxy-alpha-D-ribose 1-phosphate: step 1/2. In terms of biological role, isomerase that catalyzes the conversion of deoxy-ribose 1-phosphate (dRib-1-P) and ribose 1-phosphate (Rib-1-P) to deoxy-ribose 5-phosphate (dRib-5-P) and ribose 5-phosphate (Rib-5-P), respectively. This chain is Phosphopentomutase, found in Shewanella denitrificans (strain OS217 / ATCC BAA-1090 / DSM 15013).